Reading from the N-terminus, the 1058-residue chain is Ubiquitin-like modifier-activating enzyme 1 (1058 aa).

Positions 1-46 are disordered; it reads MSSSPLSKKRRVSGPDPKPGSNCSSAQSVLSEVSSVPTNGMAKNGS. N-acetylserine is present on S2. Residues S4, S13, S21, S24, and S46 each carry the phosphoserine modification. Residues 24–36 show a composition bias toward low complexity; that stretch reads SSAQSVLSEVSSV. At Y55 the chain carries Phosphotyrosine. 2 repeat units span residues 63–199 and 459–611. A 2 approximate repeats region spans residues 63-611; it reads GHEAMKMLQT…GTKGNVQVVI (549 aa). ATP-binding positions include A478, D504, R515, K528, and 576–577; that span reads DN. K528 is modified (N6-succinyllysine). C632 acts as the Glycyl thioester intermediate in catalysis. N6-acetyllysine is present on K671. T800 is subject to Phosphothreonine. Phosphoserine is present on residues S810, S816, S820, and S835. K980 is modified (N6-acetyllysine).

This sequence belongs to the ubiquitin-activating E1 family. In terms of assembly, monomer. Interacts with GAN (via BTB domain). In terms of processing, ISGylated.

Its subcellular location is the cytoplasm. The protein localises to the mitochondrion. The protein resides in the nucleus. The catalysed reaction is ATP + ubiquitin + [E1 ubiquitin-activating enzyme]-L-cysteine = AMP + diphosphate + S-ubiquitinyl-[E1 ubiquitin-activating enzyme]-L-cysteine.. It participates in protein modification; protein ubiquitination. Catalyzes the first step in ubiquitin conjugation to mark cellular proteins for degradation through the ubiquitin-proteasome system. Activates ubiquitin by first adenylating its C-terminal glycine residue with ATP, and thereafter linking this residue to the side chain of a cysteine residue in E1, yielding a ubiquitin-E1 thioester and free AMP. Essential for the formation of radiation-induced foci, timely DNA repair and for response to replication stress. Promotes the recruitment of TP53BP1 and BRCA1 at DNA damage sites. The polypeptide is Ubiquitin-like modifier-activating enzyme 1 (Rattus norvegicus (Rat)).